A 472-amino-acid chain; its full sequence is Acetyl-CoA decarbonylase/synthase complex subunit beta 2 (472 aa).

4 residues coordinate [Ni-Fe-S] cluster: cysteine 189, cysteine 192, cysteine 278, and cysteine 280.

Belongs to the CdhC family. In terms of assembly, monomer. The ACDS complex is made up of alpha, epsilon, beta, gamma and delta chains with a probable stoichiometry of (alpha(2)epsilon(2))(4)-beta(8)-(gamma(1)delta(1))(8) (Potential). The cofactor is [Ni-Fe-S] cluster.

It catalyses the reaction Co(I)-[corrinoid Fe-S protein] + acetyl-CoA + H(+) = methyl-Co(III)-[corrinoid Fe-S protein] + CO + CoA. The protein operates within one-carbon metabolism; methanogenesis from acetate. Functionally, part of a complex that catalyzes the reversible cleavage of acetyl-CoA, allowing growth on acetate as sole source of carbon and energy. The alpha-epsilon complex generates CO from CO(2), while the beta subunit (this protein) combines the CO with CoA and a methyl group to form acetyl-CoA. The methyl group, which is incorporated into acetyl-CoA, is transferred to the beta subunit by a corrinoid iron-sulfur protein (the gamma-delta complex). This chain is Acetyl-CoA decarbonylase/synthase complex subunit beta 2 (cdhC2), found in Methanosarcina thermophila.